The chain runs to 926 residues: Thyroid peroxidase (926 aa).

A signal peptide spans 1–14 (MGARAVLGVTLAVA). Residues 19–844 (FFASILRRKD…TCVDAGRLPR (826 aa)) lie on the Extracellular side of the membrane. Asn-129 carries N-linked (GlcNAc...) asparagine glycosylation. Cys-142 and Cys-158 are oxidised to a cystine. Asp-238 is a binding site for heme b. The active-site Proton acceptor is His-239. Residue Asp-240 coordinates Ca(2+). Intrachain disulfides connect Cys-259-Cys-269 and Cys-263-Cys-286. Residues Asn-277 and Asn-307 are each glycosylated (N-linked (GlcNAc...) asparagine). The Ca(2+) site is built by Thr-321, Phe-323, Asp-325, and Ser-327. N-linked (GlcNAc...) asparagine glycosylation is present at Asn-342. Heme b-binding residues include Glu-398 and His-493. 7 disulfide bridges follow: Cys-596-Cys-653, Cys-694-Cys-719, Cys-740-Cys-780, Cys-766-Cys-792, Cys-798-Cys-812, Cys-806-Cys-821, and Cys-823-Cys-836. A Sushi domain is found at 738–793 (DACGFPDPVEDGGFLLCEERGQRVLVFSCRHGFRLRGPAQITCTPRGWDSPPPLCK). In terms of domain architecture, EGF-like; calcium-binding spans 794–837 (DINECEDETDPPCHASARCKNTKGGVLCECSDPLVLGEDGRTCV). A helical transmembrane segment spans residues 845 to 869 (ASVVSIALGAVLVCGLAGLAWTVVC). The Cytoplasmic portion of the chain corresponds to 870-926 (RWTHADARPLLPVGEGEGDGKSPSLPLPGCGNRRDVGAAPALEVEQDLSCGSRGLCE).

The protein belongs to the peroxidase family. XPO subfamily. Interacts with DUOX1, DUOX2 and CYBA. Ca(2+) serves as cofactor. Requires heme b as cofactor. Post-translationally, heme is covalently bound through a H(2)O(2)-dependent autocatalytic process. Heme insertion is important for the delivery of protein at the cell surface. In terms of processing, cleaved in its N-terminal part. N-glycosylated; contains mannose and N-acetylglucosamine.

The protein resides in the membrane. It carries out the reaction 2 iodide + H2O2 + 2 H(+) = diiodine + 2 H2O. The catalysed reaction is [thyroglobulin]-L-tyrosine + iodide + H2O2 + H(+) = [thyroglobulin]-3-iodo-L-tyrosine + 2 H2O. It catalyses the reaction [thyroglobulin]-3-iodo-L-tyrosine + iodide + H2O2 + H(+) = [thyroglobulin]-3,5-diiodo-L-tyrosine + 2 H2O. The enzyme catalyses 2 [thyroglobulin]-3,5-diiodo-L-tyrosine + H2O2 = [thyroglobulin]-L-thyroxine + [thyroglobulin]-dehydroalanine + 2 H2O. It carries out the reaction [thyroglobulin]-3-iodo-L-tyrosine + [thyroglobulin]-3,5-diiodo-L-tyrosine + H2O2 = [thyroglobulin]-3,3',5-triiodo-L-thyronine + [thyroglobulin]-dehydroalanine + 2 H2O. Its pathway is hormone biosynthesis; thyroid hormone biosynthesis. Functionally, iodination and coupling of the hormonogenic tyrosines in thyroglobulin to yield the thyroid hormones T(3) and T(4). The protein is Thyroid peroxidase (TPO) of Sus scrofa (Pig).